The primary structure comprises 159 residues: Ribosomal RNA large subunit methyltransferase H (159 aa).

S-adenosyl-L-methionine-binding positions include Leu-76, Gly-108, and 127-132; that span reads FSKMTF.

Belongs to the RNA methyltransferase RlmH family. In terms of assembly, homodimer.

Its subcellular location is the cytoplasm. It catalyses the reaction pseudouridine(1915) in 23S rRNA + S-adenosyl-L-methionine = N(3)-methylpseudouridine(1915) in 23S rRNA + S-adenosyl-L-homocysteine + H(+). Its function is as follows. Specifically methylates the pseudouridine at position 1915 (m3Psi1915) in 23S rRNA. This is Ribosomal RNA large subunit methyltransferase H from Clostridium botulinum (strain ATCC 19397 / Type A).